The primary structure comprises 116 residues: Ig heavy chain V region 3-6 (116 aa).

Residues 1–18 form the signal peptide; that stretch reads MKVLSLLYLLTAIPGILS. The segment at 19–48 is framework-1; the sequence is DVQLQESGPGLVKPSQSLSLTCSVTGYSIT. Cys-40 and Cys-114 are oxidised to a cystine. Residues 49-53 form a complementarity-determining-1 region; that stretch reads SGYYW. The segment at 54–67 is framework-2; that stretch reads NWIRQFPGNKLEWM. Residues 68-84 form a complementarity-determining-2 region; sequence GYISYDGSNNYNPSLKN. The segment at 85–116 is framework-3; the sequence is RISITRDTSKNQFFLKLNSVTTEDTATYYCAR.

In Mus musculus (Mouse), this protein is Ig heavy chain V region 3-6 (Ighv3-6).